Here is a 634-residue protein sequence, read N- to C-terminus: Ras and EF-hand domain-containing protein homolog (634 aa).

EF-hand domains follow at residues 5–33 and 33–68; these read DVEN…CPQL and LDDN…TVQH. The Ca(2+) site is built by Asp-46, Asp-48, Ser-50, Lys-52, and Glu-57. Residues 169–310 are a coiled coil; the sequence is LSEKKHENER…RADFDQKQDE (142 aa). Disordered stretches follow at residues 216–237 and 308–328; these read ERER…EMSE and QDEL…SESV. GTP-binding positions include 449–454, 552–555, and 585–586; these read AVGKSS, NKVD, and AL. The propeptide at 632–634 is removed in mature form; it reads RGS.

It belongs to the small GTPase superfamily. Rab family. Homodimer.

The protein resides in the cytoplasm. It localises to the perinuclear region. In terms of biological role, binds GTP and GDP. Plays a role in uterine seam cell development. This Caenorhabditis briggsae protein is Ras and EF-hand domain-containing protein homolog.